A 146-amino-acid polypeptide reads, in one-letter code: Putative type II restriction enzyme MjaORF1200P (146 aa).

The protein to A.pernix APE2001.

It carries out the reaction Endonucleolytic cleavage of DNA to give specific double-stranded fragments with terminal 5'-phosphates.. A putative type II restriction enzyme, its methylase would be M.MjaORF1200P (AC Q58600). This Methanocaldococcus jannaschii (strain ATCC 43067 / DSM 2661 / JAL-1 / JCM 10045 / NBRC 100440) (Methanococcus jannaschii) protein is Putative type II restriction enzyme MjaORF1200P.